The sequence spans 566 residues: Potassium-transporting ATPase potassium-binding subunit (566 aa).

A run of 12 helical transmembrane segments spans residues 6–26 (VALL…LGIA), 60–80 (AAAI…LMLF), 128–148 (LGLT…AFVL), 167–187 (IWRI…LFLA), 247–267 (LTNF…CICF), 276–296 (VGSA…LLIM), 331–351 (FGLW…CGAV), 361–381 (LGGL…GGVG), 383–403 (GWYG…LMIG), 423–443 (IGLL…VILP), 492–512 (LMFV…GALI), and 530–550 (LFVG…FIPA).

This sequence belongs to the KdpA family. In terms of assembly, the system is composed of three essential subunits: KdpA, KdpB and KdpC.

The protein localises to the cell inner membrane. Functionally, part of the high-affinity ATP-driven potassium transport (or Kdp) system, which catalyzes the hydrolysis of ATP coupled with the electrogenic transport of potassium into the cytoplasm. This subunit binds the periplasmic potassium ions and delivers the ions to the membrane domain of KdpB through an intramembrane tunnel. This Tolumonas auensis (strain DSM 9187 / NBRC 110442 / TA 4) protein is Potassium-transporting ATPase potassium-binding subunit.